A 128-amino-acid chain; its full sequence is Large ribosomal subunit protein bL17 (128 aa).

Belongs to the bacterial ribosomal protein bL17 family. In terms of assembly, part of the 50S ribosomal subunit. Contacts protein L32.

This Edwardsiella ictaluri (strain 93-146) protein is Large ribosomal subunit protein bL17.